A 94-amino-acid polypeptide reads, in one-letter code: Co-chaperonin GroES (94 aa).

The protein belongs to the GroES chaperonin family. Heptamer of 7 subunits arranged in a ring. Interacts with the chaperonin GroEL.

Its subcellular location is the cytoplasm. Its function is as follows. Together with the chaperonin GroEL, plays an essential role in assisting protein folding. The GroEL-GroES system forms a nano-cage that allows encapsulation of the non-native substrate proteins and provides a physical environment optimized to promote and accelerate protein folding. GroES binds to the apical surface of the GroEL ring, thereby capping the opening of the GroEL channel. The sequence is that of Co-chaperonin GroES from Bacillus mycoides (strain KBAB4) (Bacillus weihenstephanensis).